An 87-amino-acid polypeptide reads, in one-letter code: Probable Fe(2+)-trafficking protein (87 aa).

This sequence belongs to the Fe(2+)-trafficking protein family.

Could be a mediator in iron transactions between iron acquisition and iron-requiring processes, such as synthesis and/or repair of Fe-S clusters in biosynthetic enzymes. This chain is Probable Fe(2+)-trafficking protein, found in Francisella tularensis subsp. holarctica (strain FTNF002-00 / FTA).